The following is a 270-amino-acid chain: Formamidopyrimidine-DNA glycosylase (270 aa).

Catalysis depends on Pro2, which acts as the Schiff-base intermediate with DNA. The active-site Proton donor is Glu3. Catalysis depends on Lys58, which acts as the Proton donor; for beta-elimination activity. Residues His91, Arg109, and Arg151 each coordinate DNA. The FPG-type zinc finger occupies 236–270; the sequence is LVYGRGGEACKTCQKPLKEIRMNDRTTVYCVTCQQ. Arg260 serves as the catalytic Proton donor; for delta-elimination activity.

Belongs to the FPG family. As to quaternary structure, monomer. The cofactor is Zn(2+).

The enzyme catalyses Hydrolysis of DNA containing ring-opened 7-methylguanine residues, releasing 2,6-diamino-4-hydroxy-5-(N-methyl)formamidopyrimidine.. The catalysed reaction is 2'-deoxyribonucleotide-(2'-deoxyribose 5'-phosphate)-2'-deoxyribonucleotide-DNA = a 3'-end 2'-deoxyribonucleotide-(2,3-dehydro-2,3-deoxyribose 5'-phosphate)-DNA + a 5'-end 5'-phospho-2'-deoxyribonucleoside-DNA + H(+). Functionally, involved in base excision repair of DNA damaged by oxidation or by mutagenic agents. Acts as a DNA glycosylase that recognizes and removes damaged bases. Has a preference for oxidized purines, such as 7,8-dihydro-8-oxoguanine (8-oxoG). Has AP (apurinic/apyrimidinic) lyase activity and introduces nicks in the DNA strand. Cleaves the DNA backbone by beta-delta elimination to generate a single-strand break at the site of the removed base with both 3'- and 5'-phosphates. This Cellvibrio japonicus (strain Ueda107) (Pseudomonas fluorescens subsp. cellulosa) protein is Formamidopyrimidine-DNA glycosylase.